A 75-amino-acid chain; its full sequence is Large ribosomal subunit protein bL31 (75 aa).

Zn(2+) is bound by residues cysteine 16, cysteine 18, cysteine 36, and cysteine 39.

It belongs to the bacterial ribosomal protein bL31 family. Type A subfamily. As to quaternary structure, part of the 50S ribosomal subunit. It depends on Zn(2+) as a cofactor.

In terms of biological role, binds the 23S rRNA. This chain is Large ribosomal subunit protein bL31, found in Desulforapulum autotrophicum (strain ATCC 43914 / DSM 3382 / VKM B-1955 / HRM2) (Desulfobacterium autotrophicum).